A 268-amino-acid chain; its full sequence is Shikimate dehydrogenase (NADP(+)) (268 aa).

Residues 14 to 16 (SKS) and threonine 61 contribute to the shikimate site. Lysine 65 acts as the Proton acceptor in catalysis. Residues asparagine 86 and aspartate 102 each contribute to the shikimate site. NADP(+) is bound by residues 126–130 (GAGGA), 149–154 (NRTFLK), and methionine 213. Tyrosine 215 serves as a coordination point for shikimate. Glycine 238 provides a ligand contact to NADP(+).

Belongs to the shikimate dehydrogenase family. Homodimer.

The enzyme catalyses shikimate + NADP(+) = 3-dehydroshikimate + NADPH + H(+). It functions in the pathway metabolic intermediate biosynthesis; chorismate biosynthesis; chorismate from D-erythrose 4-phosphate and phosphoenolpyruvate: step 4/7. In terms of biological role, involved in the biosynthesis of the chorismate, which leads to the biosynthesis of aromatic amino acids. Catalyzes the reversible NADPH linked reduction of 3-dehydroshikimate (DHSA) to yield shikimate (SA). This Haemophilus influenzae (strain PittGG) protein is Shikimate dehydrogenase (NADP(+)).